We begin with the raw amino-acid sequence, 702 residues long: Elongation factor G 2 (702 aa).

A tr-type G domain is found at 8–291; that stretch reads ELYRNIGIVA…AVIDYLPAPS (284 aa). Residues 17–24, 89–93, and 143–146 each bind GTP; these read AHVDAGKT, DTPGH, and NKMD. Positions 293-314 are disordered; it reads IPAIRGTDPDDEEKHDERHADD.

It belongs to the TRAFAC class translation factor GTPase superfamily. Classic translation factor GTPase family. EF-G/EF-2 subfamily.

The protein localises to the cytoplasm. Functionally, catalyzes the GTP-dependent ribosomal translocation step during translation elongation. During this step, the ribosome changes from the pre-translocational (PRE) to the post-translocational (POST) state as the newly formed A-site-bound peptidyl-tRNA and P-site-bound deacylated tRNA move to the P and E sites, respectively. Catalyzes the coordinated movement of the two tRNA molecules, the mRNA and conformational changes in the ribosome. The polypeptide is Elongation factor G 2 (fusB) (Pseudomonas aeruginosa (strain ATCC 15692 / DSM 22644 / CIP 104116 / JCM 14847 / LMG 12228 / 1C / PRS 101 / PAO1)).